The sequence spans 272 residues: Zinc transporter ZupT (272 aa).

A run of 8 helical transmembrane segments spans residues 12–32, 40–60, 76–96, 126–146, 158–178, 187–207, 211–231, and 247–267; these read ALAVTLAAGLATGLGSLMVVF, LLAFGLAFAGGAMVFVSLSEI, LGFTYGTLTFLGGMLLIMVID, LLTAVAITAHNFPEGLATFFA, AFAIAIHNIPEGIAIAVPVYF, FGASLLSGLAEPIGAGIGYLL, VLSEAVFGAVFGVIAGVMVFL, and HETVYGLVSGMGTLAISLVLF. Positions 136 and 139 each coordinate Fe(2+). 2 residues coordinate Zn(2+): E139 and H164. N165, E168, and E197 together coordinate Fe(2+). E168 is a binding site for Zn(2+).

It belongs to the ZIP transporter (TC 2.A.5) family. ZupT subfamily.

The protein resides in the cell inner membrane. It catalyses the reaction Zn(2+)(in) = Zn(2+)(out). Functionally, mediates zinc uptake. May also transport other divalent cations. This chain is Zinc transporter ZupT, found in Xanthomonas campestris pv. campestris (strain ATCC 33913 / DSM 3586 / NCPPB 528 / LMG 568 / P 25).